Consider the following 291-residue polypeptide: ATP synthase gamma chain (291 aa).

This sequence belongs to the ATPase gamma chain family. In terms of assembly, F-type ATPases have 2 components, CF(1) - the catalytic core - and CF(0) - the membrane proton channel. CF(1) has five subunits: alpha(3), beta(3), gamma(1), delta(1), epsilon(1). CF(0) has three main subunits: a, b and c.

The protein localises to the cell inner membrane. Produces ATP from ADP in the presence of a proton gradient across the membrane. The gamma chain is believed to be important in regulating ATPase activity and the flow of protons through the CF(0) complex. This Aquifex aeolicus (strain VF5) protein is ATP synthase gamma chain.